The primary structure comprises 454 residues: NADP-specific glutamate dehydrogenase (454 aa).

Residue serine 2 is modified to N-acetylserine. Residue lysine 114 is part of the active site.

This sequence belongs to the Glu/Leu/Phe/Val dehydrogenases family. In terms of assembly, homohexamer.

The enzyme catalyses L-glutamate + NADP(+) + H2O = 2-oxoglutarate + NH4(+) + NADPH + H(+). The polypeptide is NADP-specific glutamate dehydrogenase (GDH) (Neurospora sitophila (Chrysonilia sitophila)).